Here is a 400-residue protein sequence, read N- to C-terminus: Dual-specificity RNA methyltransferase RlmN (400 aa).

The active-site Proton acceptor is the glutamate 125. A Radical SAM core domain is found at 131–372 (ETDRGTLCVS…VRTPRGRDIL (242 aa)). Cysteine 138 and cysteine 375 form a disulfide bridge. Residues cysteine 145, cysteine 149, and cysteine 152 each contribute to the [4Fe-4S] cluster site. Residues 201–202 (GE), serine 233, 255–257 (SLH), and asparagine 332 contribute to the S-adenosyl-L-methionine site. The active-site S-methylcysteine intermediate is the cysteine 375.

Belongs to the radical SAM superfamily. RlmN family. Requires [4Fe-4S] cluster as cofactor.

It is found in the cytoplasm. It carries out the reaction adenosine(2503) in 23S rRNA + 2 reduced [2Fe-2S]-[ferredoxin] + 2 S-adenosyl-L-methionine = 2-methyladenosine(2503) in 23S rRNA + 5'-deoxyadenosine + L-methionine + 2 oxidized [2Fe-2S]-[ferredoxin] + S-adenosyl-L-homocysteine. The enzyme catalyses adenosine(37) in tRNA + 2 reduced [2Fe-2S]-[ferredoxin] + 2 S-adenosyl-L-methionine = 2-methyladenosine(37) in tRNA + 5'-deoxyadenosine + L-methionine + 2 oxidized [2Fe-2S]-[ferredoxin] + S-adenosyl-L-homocysteine. Specifically methylates position 2 of adenine 2503 in 23S rRNA and position 2 of adenine 37 in tRNAs. m2A2503 modification seems to play a crucial role in the proofreading step occurring at the peptidyl transferase center and thus would serve to optimize ribosomal fidelity. In Bradyrhizobium diazoefficiens (strain JCM 10833 / BCRC 13528 / IAM 13628 / NBRC 14792 / USDA 110), this protein is Dual-specificity RNA methyltransferase RlmN.